We begin with the raw amino-acid sequence, 201 residues long: Lipopolysaccharide core heptose(II)-phosphate phosphatase (201 aa).

A signal peptide spans 1–35 (MLAFTLRFIKNKRYFAILAGALVIIAGLTSQHAWS).

The protein belongs to the phosphoglycerate mutase family. Ais subfamily.

The protein localises to the periplasm. It functions in the pathway bacterial outer membrane biogenesis; lipopolysaccharide metabolism. Functionally, catalyzes the dephosphorylation of heptose(II) of the outer membrane lipopolysaccharide core. In Salmonella enteritidis PT4 (strain P125109), this protein is Lipopolysaccharide core heptose(II)-phosphate phosphatase.